We begin with the raw amino-acid sequence, 229 residues long: MGCFHSREPTATGKTKKEEPTSAVKTNKEEKSSNYVSEPTTMEKIKKDDVYTIILIGDQATGKSSVLQRFKNNQFEVCHKPSPIIIDCFTKKIQIEGKKISLKCYDTAGQEKFRALSQSYYRCADGIMLFYDIANQKTFDNVGRWLEEVHRLAGPNVPILIIANKCDLNEKRVVNFNNAKKFADDKNIPIIEVSAKESLGVEEAFIKLASEINKTWKPLPDNETVTIGM.

Positions 1-39 are disordered; that stretch reads MGCFHSREPTATGKTKKEEPTSAVKTNKEEKSSNYVSEP. A lipid anchor (N-myristoyl glycine) is attached at Gly-2. Cys-3 carries S-palmitoyl cysteine lipidation. Residues 15 to 32 are compositionally biased toward basic and acidic residues; the sequence is TKKEEPTSAVKTNKEEKS. 57–64 is a GTP binding site; sequence GDQATGKS. Residues 79–88 carry the Effector region motif; it reads HKPSPIIIDC. GTP is bound by residues 106-110 and 164-167; these read DTAGQ and NKCD.

The protein belongs to the small GTPase superfamily. Rab family. In terms of processing, although this sequence lacks the C-terminal cysteine motifs subject to isoprenylation in other Rab proteins, it does have N-terminal myristoylation and S-palmitoylation sequence motifs.

The sequence is that of Ras-related protein RabZ (rabZ) from Dictyostelium discoideum (Social amoeba).